The following is a 255-amino-acid chain: Thiazole synthase (255 aa).

Catalysis depends on Lys96, which acts as the Schiff-base intermediate with DXP. 1-deoxy-D-xylulose 5-phosphate is bound by residues Gly157, 183–184 (AG), and 205–206 (NT).

Belongs to the ThiG family. As to quaternary structure, homotetramer. Forms heterodimers with either ThiH or ThiS.

It localises to the cytoplasm. The catalysed reaction is [ThiS sulfur-carrier protein]-C-terminal-Gly-aminoethanethioate + 2-iminoacetate + 1-deoxy-D-xylulose 5-phosphate = [ThiS sulfur-carrier protein]-C-terminal Gly-Gly + 2-[(2R,5Z)-2-carboxy-4-methylthiazol-5(2H)-ylidene]ethyl phosphate + 2 H2O + H(+). The protein operates within cofactor biosynthesis; thiamine diphosphate biosynthesis. Functionally, catalyzes the rearrangement of 1-deoxy-D-xylulose 5-phosphate (DXP) to produce the thiazole phosphate moiety of thiamine. Sulfur is provided by the thiocarboxylate moiety of the carrier protein ThiS. In vitro, sulfur can be provided by H(2)S. The sequence is that of Thiazole synthase from Staphylococcus saprophyticus subsp. saprophyticus (strain ATCC 15305 / DSM 20229 / NCIMB 8711 / NCTC 7292 / S-41).